The sequence spans 1013 residues: Probable beta-galactosidase B (1013 aa).

Positions 1–21 (MTRILNCLLVLLACLGVSSKA) are cleaved as a signal peptide. Tyr-90 serves as a coordination point for substrate. The N-linked (GlcNAc...) asparagine glycan is linked to Asn-100. Residues Asn-135, Ala-136, Glu-137, and Asn-195 each contribute to the substrate site. The Proton donor role is filled by Glu-196. N-linked (GlcNAc...) asparagine glycosylation occurs at Asn-211. A substrate-binding site is contributed by Tyr-265. An intrachain disulfide couples Cys-271 to Cys-324. Glu-308 functions as the Nucleophile in the catalytic mechanism. Position 373 (Tyr-373) interacts with substrate. Asn-411, Asn-442, Asn-456, Asn-626, Asn-735, Asn-768, and Asn-775 each carry an N-linked (GlcNAc...) asparagine glycan.

This sequence belongs to the glycosyl hydrolase 35 family.

The protein resides in the secreted. It carries out the reaction Hydrolysis of terminal non-reducing beta-D-galactose residues in beta-D-galactosides.. Its function is as follows. Cleaves beta-linked terminal galactosyl residues from gangliosides, glycoproteins, and glycosaminoglycans. The protein is Probable beta-galactosidase B (lacB) of Penicillium rubens (strain ATCC 28089 / DSM 1075 / NRRL 1951 / Wisconsin 54-1255) (Penicillium chrysogenum).